Here is a 281-residue protein sequence, read N- to C-terminus: Pantothenate synthetase (281 aa).

ATP is bound at residue 30-37 (MGYLHEGH). The Proton donor role is filled by histidine 37. Glutamine 61 contributes to the (R)-pantoate binding site. Residue glutamine 61 participates in beta-alanine binding. Position 147–150 (147–150 (GEKD)) interacts with ATP. Position 153 (glutamine 153) interacts with (R)-pantoate. ATP contacts are provided by residues valine 176 and 184–187 (MSSR).

It belongs to the pantothenate synthetase family. In terms of assembly, homodimer.

The protein localises to the cytoplasm. The catalysed reaction is (R)-pantoate + beta-alanine + ATP = (R)-pantothenate + AMP + diphosphate + H(+). The protein operates within cofactor biosynthesis; (R)-pantothenate biosynthesis; (R)-pantothenate from (R)-pantoate and beta-alanine: step 1/1. In terms of biological role, catalyzes the condensation of pantoate with beta-alanine in an ATP-dependent reaction via a pantoyl-adenylate intermediate. This chain is Pantothenate synthetase, found in Desulfatibacillum aliphaticivorans.